The sequence spans 208 residues: uncharacterized protein (208 aa).

This is an uncharacterized protein from Methanocaldococcus jannaschii (strain ATCC 43067 / DSM 2661 / JAL-1 / JCM 10045 / NBRC 100440) (Methanococcus jannaschii).